We begin with the raw amino-acid sequence, 491 residues long: Glutamyl-tRNA(Gln) amidotransferase subunit A (491 aa).

Residues lysine 78 and serine 158 each act as charge relay system in the active site. The active-site Acyl-ester intermediate is the serine 182.

Belongs to the amidase family. GatA subfamily. As to quaternary structure, heterotrimer of A, B and C subunits.

The catalysed reaction is L-glutamyl-tRNA(Gln) + L-glutamine + ATP + H2O = L-glutaminyl-tRNA(Gln) + L-glutamate + ADP + phosphate + H(+). Functionally, allows the formation of correctly charged Gln-tRNA(Gln) through the transamidation of misacylated Glu-tRNA(Gln) in organisms which lack glutaminyl-tRNA synthetase. The reaction takes place in the presence of glutamine and ATP through an activated gamma-phospho-Glu-tRNA(Gln). This is Glutamyl-tRNA(Gln) amidotransferase subunit A from Nitrobacter winogradskyi (strain ATCC 25391 / DSM 10237 / CIP 104748 / NCIMB 11846 / Nb-255).